The primary structure comprises 243 residues: DNA repair protein RecO (243 aa).

It belongs to the RecO family.

Functionally, involved in DNA repair and RecF pathway recombination. This Hyphomonas neptunium (strain ATCC 15444) protein is DNA repair protein RecO.